The primary structure comprises 202 residues: uncharacterized protein (202 aa).

The disordered stretch occupies residues 164–202 (DTDSEQESDQESDQDSDQESEESDQESDQDSDQDSEGSE). The span at 165-202 (TDSEQESDQESDQDSDQESEESDQESDQDSDQDSEGSE) shows a compositional bias: acidic residues.

This is an uncharacterized protein from Acanthamoeba polyphaga mimivirus (APMV).